The primary structure comprises 190 residues: MTEIVKVREQLQISLSDFQEQASLQSGQIFVVGCSTSEVLGERIGTSGTMEVAEAIFSELKQFQDQTGIELAFQCCEHLNRALVVERELAMKYQFEIVTVTPVRSAGGALATYAYHNLKDPVVIEFIKADAGMDIGDTFIGMHLKHVAVPVRTSVKEIGSAHVTMATTRGKLIGGARAVYAAKEETITCR.

Belongs to the UPF0340 family.

The chain is UPF0340 protein BCE33L5016 from Bacillus cereus (strain ZK / E33L).